The sequence spans 296 residues: tRNA pseudouridine synthase B (296 aa).

The Nucleophile role is filled by Asp-38.

The protein belongs to the pseudouridine synthase TruB family. Type 1 subfamily.

It carries out the reaction uridine(55) in tRNA = pseudouridine(55) in tRNA. Its function is as follows. Responsible for synthesis of pseudouridine from uracil-55 in the psi GC loop of transfer RNAs. This is tRNA pseudouridine synthase B from Ehrlichia chaffeensis (strain ATCC CRL-10679 / Arkansas).